The sequence spans 143 residues: Large ribosomal subunit protein uL15 (143 aa).

The interval Met1–Arg59 is disordered. The span at Arg21–Ala31 shows a compositional bias: gly residues.

It belongs to the universal ribosomal protein uL15 family. As to quaternary structure, part of the 50S ribosomal subunit.

Binds to the 23S rRNA. In Albidiferax ferrireducens (strain ATCC BAA-621 / DSM 15236 / T118) (Rhodoferax ferrireducens), this protein is Large ribosomal subunit protein uL15.